Consider the following 2373-residue polypeptide: Highly reducing polyketide synthase (2373 aa).

In terms of domain architecture, Ketosynthase family 3 (KS3) spans 19 to 446 (QEPIAVVGIA…GSNAHVIVEE (428 aa)). Active-site for beta-ketoacyl synthase activity residues include Cys-192, His-329, and His-369. The interval 560-874 (IFTGQGAQWP…QYTSAMARGA (315 aa)) is malonyl-CoA:ACP transacylase (MAT) domain. Ser-652 functions as the For malonyltransferase activity in the catalytic mechanism. The N-terminal hotdog fold stretch occupies residues 942–1078 (HDLLGSKVLG…GLIRIDEDVP (137 aa)). The segment at 942–1241 (HDLLGSKVLG…LSGLRYTRID (300 aa)) is dehydratase (DH) domain. The region spanning 942 to 1246 (HDLLGSKVLG…YTRIDTGPSV (305 aa)) is the PKS/mFAS DH domain. Catalysis depends on His-974, which acts as the Proton acceptor; for dehydratase activity. Residues 1090–1246 (SHQVDASLWH…YTRIDTGPSV (157 aa)) are C-terminal hotdog fold. Asp-1154 functions as the Proton donor; for dehydratase activity in the catalytic mechanism. Positions 1669 to 1985 (GTTDSLIYSE…SANHIGKIVI (317 aa)) are enoyl reductase (ER) domain. The ketoreductase (KR) domain stretch occupies residues 2010 to 2187 (GYLLIGGLKG…NSVDLGAIQD (178 aa)). The Carrier domain occupies 2294–2370 (AIHDAVIDVT…QLAQKIVARL (77 aa)). Ser-2330 is modified (O-(pantetheine 4'-phosphoryl)serine).

The cofactor is pantetheine 4'-phosphate.

It functions in the pathway mycotoxin biosynthesis. Highly reducing polyketide synthase; part of the gene cluster that mediates the biosynthesis of brefeldin A (BFA), a protein transport inhibitor that shows antiviral, antifungal, and antitumor properties. The proposed biosynthesis of BFA involves formation of an acyclic polyketide chain that is differentially tailored throughout the backbone. The highly reducing polyketide synthase Bref-PKS is proposed to synthesize the precisely reduced octaketide precursor, which could then be directly offloaded by the thiohydrolase enzyme Bref-TH followed by a cytochrome P450 monooxygenase-mediated formation of the cyclopentane ring and macrocyclization to afford 7-deoxy BFA. Alternatively, the first ring annulation can also occur on the ACP-tethered intermediate before the thiohydrolase release and lactonization. The C7-hydroxylation by another cytochrome P450 monooxygenase is believed to be the final step in the process to obtain the final structure of BFA. In addition to the HRPKS Bref-PKS and the thiohydrolase Bref-TH, the brefeldin A biosynthesis cluster contains 4 cytochrome p450 monooxygenases (called orf3 to orf6), as well a the probable cluster-specific transcription regulator orf8. The sequence is that of Highly reducing polyketide synthase from Eupenicillium brefeldianum (Penicillium brefeldianum).